A 267-amino-acid polypeptide reads, in one-letter code: MASYAVLGATGNTGQALINILLQSPEKKIHAYCRSKQKLLRLTPQLAGNKNVKVFEGSLNDTAVIADCIRGSRAVFLAVAVPDNMPGMTIAQDTARVTVNALQRIRAENEKAILPKVIVLSSAKLDDKLCQNMPNAMKVLVKLATSNQCADLKESQRILTAERHWISSTFMMPGGLVQDAQKGHALSLETEKTPLSYLDLAAGMVEVADAEDEYHMKNVSVIPTGTGVKFPYESLLEVVKGLLAHYFPWTYRYTGAMPMPVLPQKTA.

It belongs to the avfA family.

It participates in mycotoxin biosynthesis. Oxidoreductase; part of the fragmented gene cluster that mediates the biosynthesis of dothistromin (DOTH), a polyketide toxin very similar in structure to the aflatoxin precursor, versicolorin B. The first step of the pathway is the conversion of acetate to norsolorinic acid (NOR) and requires the fatty acid synthase subunits hexA and hexB, as well as the polyketide synthase pksA. PksA combines a hexanoyl starter unit and 7 malonyl-CoA extender units to synthesize the precursor NOR. The hexanoyl starter unit is provided to the acyl-carrier protein (ACP) domain by the fungal fatty acid synthase hexA/hexB. The second step is the conversion of NOR to averantin (AVN) and requires the norsolorinic acid ketoreductase nor1, which catalyzes the dehydration of norsolorinic acid to form (1'S)-averantin. The cytochrome P450 monooxygenase avnA then catalyzes the hydroxylation of AVN to 5'hydroxyaverantin (HAVN). The next step is performed by adhA that transforms HAVN to averufin (AVF). Averufin might then be converted to hydroxyversicolorone by cypX and avfA. Hydroxyversicolorone is further converted versiconal hemiacetal acetate (VHA) by moxY. VHA is then the substrate for the versiconal hemiacetal acetate esterase est1 to yield versiconal (VAL). Versicolorin B synthase vbsA then converts VAL to versicolorin B (VERB) by closing the bisfuran ring. Then, the activity of the versicolorin B desaturase verB leads to versicolorin A (VERA). DotB, a predicted chloroperoxidase, may perform epoxidation of the A-ring of VERA. Alternatively, a cytochrome P450, such as cypX or avnA could catalyze this step. It is also possible that another, uncharacterized, cytochrome P450 enzyme is responsible for this step. Opening of the epoxide could potentially be achieved by the epoxide hydrolase epoA. However, epoA seems not to be required for DOTH biosynthesis, but other epoxide hydrolases may have the ability to complement this hydrolysis. Alternatively, opening of the epoxide ring could be achieved non-enzymatically. The next step is the deoxygenation of ring A to yield the 5,8-dihydroxyanthraquinone which is most likely catalyzed by the NADPH dehydrogenase encoded by ver1. The last stages of DOTH biosynthesis are proposed to involve hydroxylation of the bisfuran. OrdB and norB might have oxidative roles here. An alternative possibility is that cytochrome P450 monoogenases such as avnA and cypX might perform these steps in addition to previously proposed steps. The polypeptide is Oxidoreductase ordB (Dothistroma septosporum (strain NZE10 / CBS 128990) (Red band needle blight fungus)).